The chain runs to 169 residues: MSEEYITVGKVVNTQGIQGEVRIIPTTDFPERFVKNDKISVLLRGQRRDYTIERVWEHKQFIIIKFSEIPDMTAAEKLKGGLLQVTMEELVPLPEGNYYIFQIVGLKVVDENEQELGTVAQVLQTGANDVYVVKRSEGKDILIPAIKSVVKEINITEGKMKVELLEGLI.

Positions 95-168 (EGNYYIFQIV…KMKVELLEGL (74 aa)) constitute a PRC barrel domain.

This sequence belongs to the RimM family. As to quaternary structure, binds ribosomal protein uS19.

It localises to the cytoplasm. In terms of biological role, an accessory protein needed during the final step in the assembly of 30S ribosomal subunit, possibly for assembly of the head region. Essential for efficient processing of 16S rRNA. May be needed both before and after RbfA during the maturation of 16S rRNA. It has affinity for free ribosomal 30S subunits but not for 70S ribosomes. This chain is Ribosome maturation factor RimM, found in Desulforamulus reducens (strain ATCC BAA-1160 / DSM 100696 / MI-1) (Desulfotomaculum reducens).